Consider the following 24-residue polypeptide: Brevinin-1Bc (24 aa).

C18 and C24 are oxidised to a cystine.

Expressed by the skin glands.

The protein localises to the secreted. Functionally, antibacterial activity against Gram-positive bacterium S.aureus. This chain is Brevinin-1Bc, found in Lithobates berlandieri (Rio Grande leopard frog).